Consider the following 448-residue polypeptide: N-succinylarginine dihydrolase (448 aa).

Substrate is bound by residues A19–S28, N110, and H137–R138. E174 is a catalytic residue. R216 lines the substrate pocket. H252 is an active-site residue. Substrate contacts are provided by D254 and N366. The active-site Nucleophile is the C372.

It belongs to the succinylarginine dihydrolase family. Homodimer.

The catalysed reaction is N(2)-succinyl-L-arginine + 2 H2O + 2 H(+) = N(2)-succinyl-L-ornithine + 2 NH4(+) + CO2. It functions in the pathway amino-acid degradation; L-arginine degradation via AST pathway; L-glutamate and succinate from L-arginine: step 2/5. Its function is as follows. Catalyzes the hydrolysis of N(2)-succinylarginine into N(2)-succinylornithine, ammonia and CO(2). The protein is N-succinylarginine dihydrolase of Legionella pneumophila (strain Paris).